We begin with the raw amino-acid sequence, 315 residues long: B3 domain-containing protein At1g05920 (315 aa).

The interval 24–129 is disordered; it reads MISRDNQKKT…PQVASVPKSV (106 aa). Composition is skewed to basic and acidic residues over residues 39–51, 66–83, and 100–114; these read VREE…EEMI, KEGK…DNRT, and FDHV…HAYL. The TF-B3 DNA-binding region spans 204–306; it reads INTVIQNDFL…ILCFALVPPT (103 aa).

Its subcellular location is the nucleus. This is B3 domain-containing protein At1g05920 from Arabidopsis thaliana (Mouse-ear cress).